The chain runs to 40 residues: Ostricacin-3 (40 aa).

Intrachain disulfides connect Cys8–Cys36, Cys15–Cys30, and Cys20–Cys37.

Its subcellular location is the secreted. Its function is as follows. Has antibacterial activity against the Gram-positive bacterium S.aureus 1056 MRSA (MIC=2.78 ug/ml) and the Gram-negative bacterium E.coli O157:H7 (MIC=2.41 ug/ml). Does not have antifungal activity against the yeast C.albicans 3153A. In Struthio camelus (Common ostrich), this protein is Ostricacin-3.